We begin with the raw amino-acid sequence, 407 residues long: Inactive non-canonical poly(A) RNA polymerase protein Trf4-2 (407 aa).

Mg(2+)-binding residues include D85 and D87. The PAP-associated domain occupies 221–280 (LALLLIQFLDYYGRKFDFFKYGISVLGQGGCVEKARLRSTLGENNWQSVLCIEDPVTPTN). Residues 354–390 (LVQPSPTGSTSPSASASASEDERSGGPATIGFGRCDD) form a disordered region. Residues 357-371 (PSPTGSTSPSASASA) show a composition bias toward low complexity.

This sequence belongs to the DNA polymerase type-B-like family.

This Drosophila melanogaster (Fruit fly) protein is Inactive non-canonical poly(A) RNA polymerase protein Trf4-2.